The following is a 356-amino-acid chain: Ubiquitin-conjugating enzyme E2 Z (356 aa).

The segment covering 1–16 (MAESPTEEAATATAGA) has biased composition (low complexity). Positions 1–22 (MAESPTEEAATATAGAGAAGPG) are disordered. One can recognise a UBC core domain in the interval 101–255 (QCLLRIKRDI…IRHETIRVAV (155 aa)). Cys-190 serves as the catalytic Glycyl thioester intermediate. Residues 334 to 356 (NAEMDSDSSSSGTETDLHGSLRV) form a disordered region. Ser-339 carries the phosphoserine modification.

Belongs to the ubiquitin-conjugating enzyme family.

It localises to the cytoplasm. It is found in the nucleus. It catalyses the reaction S-ubiquitinyl-[E1 ubiquitin-activating enzyme]-L-cysteine + [E2 ubiquitin-conjugating enzyme]-L-cysteine = [E1 ubiquitin-activating enzyme]-L-cysteine + S-ubiquitinyl-[E2 ubiquitin-conjugating enzyme]-L-cysteine.. It participates in protein modification; protein ubiquitination. In terms of biological role, catalyzes the covalent attachment of ubiquitin to other proteins. Specific substrate for UBA6, not charged with ubiquitin by UBE1. May be involved in apoptosis regulation. The chain is Ubiquitin-conjugating enzyme E2 Z (Ube2z) from Rattus norvegicus (Rat).